The sequence spans 275 residues: Dermonecrotic toxin LamSicTox-alphaIV1iii (275 aa).

Histidine 5 is an active-site residue. Mg(2+) is bound by residues glutamate 25 and aspartate 27. Histidine 41 functions as the Nucleophile in the catalytic mechanism. Cystine bridges form between cysteine 45/cysteine 51 and cysteine 47/cysteine 192. Aspartate 85 contributes to the Mg(2+) binding site.

It belongs to the arthropod phospholipase D family. Class II subfamily. It depends on Mg(2+) as a cofactor. In terms of tissue distribution, expressed by the venom gland.

The protein localises to the secreted. The catalysed reaction is an N-(acyl)-sphingosylphosphocholine = an N-(acyl)-sphingosyl-1,3-cyclic phosphate + choline. It carries out the reaction an N-(acyl)-sphingosylphosphoethanolamine = an N-(acyl)-sphingosyl-1,3-cyclic phosphate + ethanolamine. The enzyme catalyses a 1-acyl-sn-glycero-3-phosphocholine = a 1-acyl-sn-glycero-2,3-cyclic phosphate + choline. It catalyses the reaction a 1-acyl-sn-glycero-3-phosphoethanolamine = a 1-acyl-sn-glycero-2,3-cyclic phosphate + ethanolamine. Functionally, dermonecrotic toxins cleave the phosphodiester linkage between the phosphate and headgroup of certain phospholipids (sphingolipid and lysolipid substrates), forming an alcohol (often choline) and a cyclic phosphate. This toxin acts on sphingomyelin (SM). It may also act on ceramide phosphoethanolamine (CPE), lysophosphatidylcholine (LPC) and lysophosphatidylethanolamine (LPE), but not on lysophosphatidylserine (LPS), and lysophosphatidylglycerol (LPG). It acts by transphosphatidylation, releasing exclusively cyclic phosphate products as second products. Induces dermonecrosis, hemolysis, increased vascular permeability, edema, inflammatory response, and platelet aggregation. The protein is Dermonecrotic toxin LamSicTox-alphaIV1iii of Loxosceles amazonica (Recluse spider).